The following is a 229-amino-acid chain: CRISPR pre-crRNA endoribonuclease Cas5d (229 aa).

Belongs to the CRISPR-associated protein Cas5 family. Subtype I-C/Dvulg subfamily. It depends on Does not require a metal cofactor. as a cofactor.

Functionally, CRISPR (clustered regularly interspaced short palindromic repeat) is an adaptive immune system that provides protection against mobile genetic elements (viruses, transposable elements and conjugative plasmids). CRISPR clusters contain spacers, sequences complementary to antecedent mobile elements, and target invading nucleic acids. CRISPR clusters are transcribed and processed into CRISPR RNA (crRNA). This protein is a sequence-specific endonuclease that cleaves pre-crRNA into mature crRNA, possibly by an intramolecular attack of the 2'-hydroxyl group of G26 on the scissile phosphodiester, cutting the precursor 3' to G26 residue yielding 5'-hydroxyl and 2' and/or 3' ends lacking a hydroxyl group (perhaps a 2'/3' cyclic phosphodiester). Requires between 4 and 8 nt downstream of the cleavage site for both binding and cleavage of pre-crRNA. Substitution with dG at this position abolishes cleavage but not RNA binding. Does not cleave pre-crRNA associated with the M.succiniciproducens strain MBEL55E Cas5 protein (AC Q65TW5) CRISPR locus. This Thermus thermophilus (strain ATCC BAA-163 / DSM 7039 / HB27) protein is CRISPR pre-crRNA endoribonuclease Cas5d.